A 213-amino-acid polypeptide reads, in one-letter code: Endoplasmic reticulum vesicle protein 25 (213 aa).

A signal peptide spans 1–20; that stretch reads MILRIPSLLYLFTLLTAVYA. Topologically, residues 21–181 are lumenal; that stretch reads VKFDLTSDRN…TNESTNQRVK (161 aa). The region spanning 33-122 is the GOLD domain; it reads PSIIWNFASA…VRSVELDVDI (90 aa). A helical transmembrane segment spans residues 182–202; the sequence is VFSVLIICCTIGLGVWQLLHL. Residues 203–213 are Cytoplasmic-facing; sequence RSFFKRKYLID.

Belongs to the EMP24/GP25L family.

It localises to the endoplasmic reticulum membrane. The protein localises to the golgi apparatus membrane. Its function is as follows. Constituent of COPII-coated endoplasmic reticulum-derived transport vesicles. Required for efficient transport of a subset of secretory proteins to the Golgi. Facilitates retrograde transport from the Golgi to the endoplasmic reticulum. The protein is Endoplasmic reticulum vesicle protein 25 (ERV25) of Cryptococcus neoformans var. neoformans serotype D (strain B-3501A) (Filobasidiella neoformans).